The primary structure comprises 109 residues: uncharacterized protein (109 aa).

A helical membrane pass occupies residues 29–49 (ITIIITLVIIFIIFTLIILYF).

It localises to the membrane. This is an uncharacterized protein from Sputnik virophage.